A 200-amino-acid polypeptide reads, in one-letter code: MARYTGPAWKLSRRLGISLSGTGKELEKRPYAPGPHGPNQRKKLSEYGLQLQEKQKLRHMYGMTERQFRRTFDQAGKMPGKHGENFMILLEARLDNLVYRMGLARTRRAARQLVNHGHITVDGSRVDIPSYRVKPGQTISVREKSNNLVVVKEAIEVNNFVPEYLTFDADKLEATYTRHAERAELPAEINEALIVEFYSR.

The segment at 22 to 42 (TGKELEKRPYAPGPHGPNQRK) is disordered. Positions 92 to 152 (ARLDNLVYRM…EKSNNLVVVK (61 aa)) constitute an S4 RNA-binding domain.

Belongs to the universal ribosomal protein uS4 family. As to quaternary structure, part of the 30S ribosomal subunit. Contacts protein S5. The interaction surface between S4 and S5 is involved in control of translational fidelity.

One of the primary rRNA binding proteins, it binds directly to 16S rRNA where it nucleates assembly of the body of the 30S subunit. In terms of biological role, with S5 and S12 plays an important role in translational accuracy. The polypeptide is Small ribosomal subunit protein uS4 (Bacillus cereus (strain Q1)).